A 394-amino-acid chain; its full sequence is Putative serine protease HhoA (394 aa).

Residues 1–24 (MKYPTWLRRIGGYLLAFAVGTAFG) form the signal peptide. Positions 293 to 377 (MMNITVDQAQ…ALKLDLLRGD (85 aa)) constitute a PDZ domain.

It belongs to the peptidase S1C family.

The protein resides in the periplasm. Functionally, a putative protease, its function overlaps that of the related putative proteases HhoB and HtrA. In Synechocystis sp. (strain ATCC 27184 / PCC 6803 / Kazusa), this protein is Putative serine protease HhoA (hhoA).